We begin with the raw amino-acid sequence, 112 residues long: ATP synthase subunit c (112 aa).

The next 2 helical transmembrane spans lie at phenylalanine 36–methionine 56 and methionine 81–isoleucine 101.

It belongs to the ATPase C chain family. As to quaternary structure, F-type ATPases have 2 components, F(1) - the catalytic core - and F(0) - the membrane proton channel. F(1) has five subunits: alpha(3), beta(3), gamma(1), delta(1), epsilon(1). F(0) has three main subunits: a(1), b(2) and c(10-14). The alpha and beta chains form an alternating ring which encloses part of the gamma chain. F(1) is attached to F(0) by a central stalk formed by the gamma and epsilon chains, while a peripheral stalk is formed by the delta and b chains.

The protein localises to the cell inner membrane. Functionally, f(1)F(0) ATP synthase produces ATP from ADP in the presence of a proton or sodium gradient. F-type ATPases consist of two structural domains, F(1) containing the extramembraneous catalytic core and F(0) containing the membrane proton channel, linked together by a central stalk and a peripheral stalk. During catalysis, ATP synthesis in the catalytic domain of F(1) is coupled via a rotary mechanism of the central stalk subunits to proton translocation. In terms of biological role, key component of the F(0) channel; it plays a direct role in translocation across the membrane. A homomeric c-ring of between 10-14 subunits forms the central stalk rotor element with the F(1) delta and epsilon subunits. This Campylobacter jejuni subsp. doylei (strain ATCC BAA-1458 / RM4099 / 269.97) protein is ATP synthase subunit c.